The following is a 321-amino-acid chain: Phosphopantothenate--cysteine ligase 1 (321 aa).

This sequence belongs to the PPC synthetase family. As to quaternary structure, homodimer.

The enzyme catalyses (R)-4'-phosphopantothenate + L-cysteine + CTP = N-[(R)-4-phosphopantothenoyl]-L-cysteine + CMP + diphosphate + H(+). It functions in the pathway cofactor biosynthesis; coenzyme A biosynthesis; CoA from (R)-pantothenate: step 2/5. Catalyzes the first step in the biosynthesis of coenzyme A from vitamin B5, where cysteine is conjugated to 4'-phosphopantothenate to form 4-phosphopantothenoylcysteine. This chain is Phosphopantothenate--cysteine ligase 1, found in Oryza sativa subsp. japonica (Rice).